Here is a 155-residue protein sequence, read N- to C-terminus: MSRKGSTPQRTVLPDPKHGSETIARFINMVMQSGKKSVAEKIVYGAMDVIGEKNPNAIELVQKALDNVAPAVEVKSRRVGGATYQVPVEVRSSRRMALAMRWLIDSARKRGENTMPRKLAAELLDASESRGGAIKKREETHRMAEANKAFAHYRW.

It belongs to the universal ribosomal protein uS7 family. As to quaternary structure, part of the 30S ribosomal subunit. Contacts proteins S9 and S11.

Its function is as follows. One of the primary rRNA binding proteins, it binds directly to 16S rRNA where it nucleates assembly of the head domain of the 30S subunit. Is located at the subunit interface close to the decoding center, probably blocks exit of the E-site tRNA. The chain is Small ribosomal subunit protein uS7 from Xanthomonas axonopodis pv. citri (strain 306).